The primary structure comprises 255 residues: Proteasome subunit alpha (255 aa).

The segment at 228 to 255 is disordered; sequence LLASPAGTSGPTGEPGPAGTAATDGGDL. Over residues 232 to 255 the composition is skewed to low complexity; sequence PAGTSGPTGEPGPAGTAATDGGDL.

This sequence belongs to the peptidase T1A family. In terms of assembly, the 20S proteasome core is composed of 14 alpha and 14 beta subunits that assemble into four stacked heptameric rings, resulting in a barrel-shaped structure. The two inner rings, each composed of seven catalytic beta subunits, are sandwiched by two outer rings, each composed of seven alpha subunits. The catalytic chamber with the active sites is on the inside of the barrel. Has a gated structure, the ends of the cylinder being occluded by the N-termini of the alpha-subunits. Is capped by the proteasome-associated ATPase, ARC.

Its subcellular location is the cytoplasm. Its pathway is protein degradation; proteasomal Pup-dependent pathway. The formation of the proteasomal ATPase ARC-20S proteasome complex, likely via the docking of the C-termini of ARC into the intersubunit pockets in the alpha-rings, may trigger opening of the gate for substrate entry. Interconversion between the open-gate and close-gate conformations leads to a dynamic regulation of the 20S proteasome proteolysis activity. Component of the proteasome core, a large protease complex with broad specificity involved in protein degradation. This chain is Proteasome subunit alpha, found in Sanguibacter keddieii (strain ATCC 51767 / DSM 10542 / NCFB 3025 / ST-74).